We begin with the raw amino-acid sequence, 94 residues long: Cyclin-dependent kinases regulatory subunit (94 aa).

The protein belongs to the CKS family. Forms a homohexamer that can probably bind six kinase subunits. Interacts with cdk-1.

The protein resides in the nucleus. Its function is as follows. Binds to the catalytic subunit of the cyclin dependent kinases and is essential for their biological function. Has a role in the exit from M phase during early mitotic cell division. More specifically, thought to act by degrading B-type cyclins that causes breakdown of nuclear envelope and exit mitosis. The chain is Cyclin-dependent kinases regulatory subunit (cks-1) from Caenorhabditis elegans.